The chain runs to 404 residues: Zinc finger CCCH domain-containing protein 3 (404 aa).

5 C3H1-type zinc fingers span residues 47-75 (RPGE…HPTH), 90-118 (RIGQ…HPKD), 135-163 (RLGE…HPQP), 261-289 (SSDQ…HPGV), and 307-335 (RPGQ…HPML). Polar residues predominate over residues 350–374 (FASPVTTHQRISPTPNRSDSKSLSN). The interval 350 to 404 (FASPVTTHQRISPTPNRSDSKSLSNGKPDVKKESSETEKPDNGEVQDLSEDASSP) is disordered. Positions 377-391 (PDVKKESSETEKPDN) are enriched in basic and acidic residues.

Its subcellular location is the nucleus. In terms of biological role, possesses RNA-binding and ribonuclease activities in vitro. This Arabidopsis thaliana (Mouse-ear cress) protein is Zinc finger CCCH domain-containing protein 3.